We begin with the raw amino-acid sequence, 591 residues long: Autotransporter adhesin NhhA (591 aa).

A signal peptide spans 1 to 51; sequence MNKIYRIIWNSALNAWVVVSELTRNHTKRASATVKTAVLATLLFATVQASA. The interval 52 to 503 is surface exposed passenger domain; that stretch reads NNEEQEEDLY…TNVAQLKGVA (452 aa). Residues 504–591 are translocator domain; that stretch reads QNLNNRIDNV…GASASVGYQW (88 aa). Beta stranded transmembrane passes span 537 to 547, 551 to 561, 570 to 576, and 580 to 591; these read GKSMMAIGGGT, EAGYAIGYSSI, KGTASGN, and HFGASASVGYQW.

It belongs to the autotransporter-2 (AT-2) (TC 1.B.40) family. Homotrimer.

The protein resides in the cell surface. It is found in the cell outer membrane. Involved in adhesion of capsulated meningococci to host epithelial cells. Interacts with laminin and heparan sulfate, promoting the adherence to the extracellular matrix (ECM) components. The sequence is that of Autotransporter adhesin NhhA from Neisseria meningitidis serogroup B (strain ATCC BAA-335 / MC58).